The sequence spans 246 residues: Small ribosomal subunit protein uS2 (246 aa).

Residues 225–246 (SKSSASVPNKDEYVAAEDGAAE) are disordered.

It belongs to the universal ribosomal protein uS2 family.

The polypeptide is Small ribosomal subunit protein uS2 (Cellvibrio japonicus (strain Ueda107) (Pseudomonas fluorescens subsp. cellulosa)).